The following is a 196-amino-acid chain: Large ribosomal subunit protein bL9 (196 aa).

The interval 172 to 196 (NESARPEAFFDPEAEIEQEEGEENA) is disordered. The segment covering 181–196 (FDPEAEIEQEEGEENA) has biased composition (acidic residues).

It belongs to the bacterial ribosomal protein bL9 family.

Binds to the 23S rRNA. This Chelativorans sp. (strain BNC1) protein is Large ribosomal subunit protein bL9.